The sequence spans 161 residues: MPSFDIVSKVDMQEVDNAVNQAVKEIAQRYDFKGSKSEVTLEKDAIKVLTEDDFRLKAIIDILQSKFIKRGISAKALQYGKVENASGSMVRQVIDVQQGVSKEKGKEINNVIKETKLKVQSQIQDDQVRVTGKNIDDLQQVIQLLKGKDLGLDLQFVNFRQ.

The protein belongs to the YajQ family.

Its function is as follows. Nucleotide-binding protein. The sequence is that of Nucleotide-binding protein Geob_0921 from Geotalea daltonii (strain DSM 22248 / JCM 15807 / FRC-32) (Geobacter daltonii).